A 382-amino-acid polypeptide reads, in one-letter code: MAQSDLYGVLGVAKDASQDEIKKAYRKLSKKYHPDLNKAPDAAEKFKEVQDAYDVLGDEQKRANYDQSGSADGAQGGFGGFGGGQQGGFGGFGGGGGFDDIFNQFFGGGGGQRNPNAPRPGRDLQYQMDLTFEEAIFGKKTKIKYNREAQCHTCGGNGAKPGTSPVTCHQCGGSGYVTTETNTPLGRMRSQQPCPVCHGTGQEIKEKCPTCGGSGHEEERHEVEVTIPAGVDDGQQMRLQGQGEAGQNGGGYGDLFIIFKVQPSKDFRRDGTEIYFDQDISFVQATLGDDVTVKTVHGDVKLKVPAGTQGGTTFRLRGKGAPRLRGNGNGDEHVTIKVVTPKNLNKGQRDALRDFAKASGESVTGSGKGNLFNKMRDKFNEN.

The J domain occupies 5–69; that stretch reads DLYGVLGVAK…QKRANYDQSG (65 aa). A disordered region spans residues 104–123; sequence QFFGGGGGQRNPNAPRPGRD. Residues 138–220 form a CR-type zinc finger; it reads GKKTKIKYNR…CGGSGHEEER (83 aa). 8 residues coordinate Zn(2+): cysteine 151, cysteine 154, cysteine 168, cysteine 171, cysteine 194, cysteine 197, cysteine 208, and cysteine 211. CXXCXGXG motif repeat units lie at residues 151–158, 168–175, 194–201, and 208–215; these read CHTCGGNG, CHQCGGSG, CPVCHGTG, and CPTCGGSG. The segment at 358-382 is disordered; the sequence is ASGESVTGSGKGNLFNKMRDKFNEN.

This sequence belongs to the DnaJ family. As to quaternary structure, homodimer. Requires Zn(2+) as cofactor.

The protein localises to the cytoplasm. Participates actively in the response to hyperosmotic and heat shock by preventing the aggregation of stress-denatured proteins and by disaggregating proteins, also in an autonomous, DnaK-independent fashion. Unfolded proteins bind initially to DnaJ; upon interaction with the DnaJ-bound protein, DnaK hydrolyzes its bound ATP, resulting in the formation of a stable complex. GrpE releases ADP from DnaK; ATP binding to DnaK triggers the release of the substrate protein, thus completing the reaction cycle. Several rounds of ATP-dependent interactions between DnaJ, DnaK and GrpE are required for fully efficient folding. Also involved, together with DnaK and GrpE, in the DNA replication of plasmids through activation of initiation proteins. The sequence is that of Chaperone protein DnaJ from Levilactobacillus brevis (strain ATCC 367 / BCRC 12310 / CIP 105137 / JCM 1170 / LMG 11437 / NCIMB 947 / NCTC 947) (Lactobacillus brevis).